Reading from the N-terminus, the 153-residue chain is UPF0260 protein YcgN (153 aa).

Belongs to the UPF0260 family.

This chain is UPF0260 protein YcgN, found in Salmonella agona (strain SL483).